A 212-amino-acid polypeptide reads, in one-letter code: Root-specific lectin (212 aa).

Residues Met-1–Ala-26 form the signal peptide. Gln-27 bears the Pyrrolidone carboxylic acid mark. Chitin-binding type-1 domains are found at residues Gln-27–Thr-68, Ser-69–Ala-111, Asp-112–Thr-154, and Asp-155–Gly-197. Disulfide bonds link Cys-29-Cys-44, Cys-38-Cys-50, Cys-43-Cys-57, Cys-61-Cys-66, Cys-72-Cys-87, Cys-81-Cys-93, Cys-86-Cys-100, Cys-104-Cys-109, Cys-115-Cys-130, Cys-124-Cys-136, Cys-129-Cys-143, Cys-147-Cys-152, Cys-158-Cys-173, Cys-167-Cys-179, Cys-172-Cys-186, and Cys-190-Cys-195. Substrate is bound at residue Met-36–Cys-38. Ser-88 to Tyr-99 provides a ligand contact to substrate. Ser-140–Glu-141 lines the substrate pocket. N-linked (GlcNAc...) asparagine glycosylation occurs at Asn-206.

In roots.

Functionally, carbohydrate binding. The polypeptide is Root-specific lectin (Hordeum vulgare (Barley)).